Here is a 124-residue protein sequence, read N- to C-terminus: Probable glycine cleavage system H protein (124 aa).

The 82-residue stretch at 25 to 106 folds into the Lipoyl-binding domain; it reads TATIGITDYA…PYGSWLVKMA (82 aa). The residue at position 66 (Lys66) is an N6-lipoyllysine.

It belongs to the GcvH family. In terms of assembly, the glycine cleavage system is composed of four proteins: P, T, L and H. (R)-lipoate is required as a cofactor.

Functionally, the glycine cleavage system catalyzes the degradation of glycine. The H protein shuttles the methylamine group of glycine from the P protein to the T protein. The protein is Probable glycine cleavage system H protein of Thermoplasma acidophilum (strain ATCC 25905 / DSM 1728 / JCM 9062 / NBRC 15155 / AMRC-C165).